A 506-amino-acid chain; its full sequence is Ribose import ATP-binding protein RbsA 1 (506 aa).

2 consecutive ABC transporter domains span residues 5 to 241 (LALT…VGRR) and 254 to 498 (RDAA…TSDA). 37-44 (GENGAGKS) is a binding site for ATP.

This sequence belongs to the ABC transporter superfamily. Ribose importer (TC 3.A.1.2.1) family. In terms of assembly, the complex is composed of an ATP-binding protein (RbsA), two transmembrane proteins (RbsC) and a solute-binding protein (RbsB).

Its subcellular location is the cell inner membrane. The catalysed reaction is D-ribose(out) + ATP + H2O = D-ribose(in) + ADP + phosphate + H(+). Its function is as follows. Part of the ABC transporter complex RbsABC involved in ribose import. Responsible for energy coupling to the transport system. This chain is Ribose import ATP-binding protein RbsA 1, found in Burkholderia thailandensis (strain ATCC 700388 / DSM 13276 / CCUG 48851 / CIP 106301 / E264).